A 319-amino-acid polypeptide reads, in one-letter code: ATP-dependent 6-phosphofructokinase (319 aa).

Gly11 lines the ATP pocket. 21-25 (RAVVR) is a binding site for ADP. ATP is bound by residues 72 to 73 (RC) and 102 to 105 (GNGS). Asn103 contributes to the Mg(2+) binding site. 125-127 (TID) contacts substrate. The Proton acceptor role is filled by Asp127. An ADP-binding site is contributed by Arg154. Substrate-binding positions include Arg162 and 169–171 (MGR). Residues 185–187 (GAE), Arg211, and 213–215 (KMH) contribute to the ADP site. Substrate contacts are provided by residues Glu222, Arg243, and 249–252 (HIQR).

It belongs to the phosphofructokinase type A (PFKA) family. ATP-dependent PFK group I subfamily. Prokaryotic clade 'B1' sub-subfamily. As to quaternary structure, homotetramer. Mg(2+) is required as a cofactor.

It is found in the cytoplasm. The catalysed reaction is beta-D-fructose 6-phosphate + ATP = beta-D-fructose 1,6-bisphosphate + ADP + H(+). It functions in the pathway carbohydrate degradation; glycolysis; D-glyceraldehyde 3-phosphate and glycerone phosphate from D-glucose: step 3/4. Its activity is regulated as follows. Allosterically activated by ADP and other diphosphonucleosides, and allosterically inhibited by phosphoenolpyruvate. Its function is as follows. Catalyzes the phosphorylation of D-fructose 6-phosphate to fructose 1,6-bisphosphate by ATP, the first committing step of glycolysis. This is ATP-dependent 6-phosphofructokinase from Clostridium acetobutylicum (strain ATCC 824 / DSM 792 / JCM 1419 / IAM 19013 / LMG 5710 / NBRC 13948 / NRRL B-527 / VKM B-1787 / 2291 / W).